The primary structure comprises 104 residues: Nucleoid-associated protein DICTH_1981 (104 aa).

Residues 85–104 (KSAEKMGSLADGLPLPPGLF) form a disordered region.

Belongs to the YbaB/EbfC family. In terms of assembly, homodimer.

It localises to the cytoplasm. The protein localises to the nucleoid. Its function is as follows. Binds to DNA and alters its conformation. May be involved in regulation of gene expression, nucleoid organization and DNA protection. The sequence is that of Nucleoid-associated protein DICTH_1981 from Dictyoglomus thermophilum (strain ATCC 35947 / DSM 3960 / H-6-12).